The following is a 275-amino-acid chain: MSQQLQQIIDTAWENRAELSPKAAPADVREAVAHALEQLDKGALRVAEKIDGNWTVHQWLKKAVLLSFRLEDNAPMPAGGYSQFYDKVPSKFANYTAEDFAAGGFRVVPPAIARRGSFIAKNVVLMPSYTNIGAYVDEGTMVDTWATVGSCAQIGKNVHLSGGVGIGGVLEPLQANPVIIEDNCFIGARSEVVEGVIVEENSVISMGVYLGQSTKIYDRETGEVSYGRIPAGSVVVAGNLPSKDGSHSLYCAVIVKKVDAKTRAKVGLNELLRGD.

Substrate-binding residues include Arg106 and Asp143.

Belongs to the transferase hexapeptide repeat family. As to quaternary structure, homotrimer.

The protein localises to the cytoplasm. It carries out the reaction (S)-2,3,4,5-tetrahydrodipicolinate + succinyl-CoA + H2O = (S)-2-succinylamino-6-oxoheptanedioate + CoA. It functions in the pathway amino-acid biosynthesis; L-lysine biosynthesis via DAP pathway; LL-2,6-diaminopimelate from (S)-tetrahydrodipicolinate (succinylase route): step 1/3. The protein is 2,3,4,5-tetrahydropyridine-2,6-dicarboxylate N-succinyltransferase of Burkholderia ambifaria (strain ATCC BAA-244 / DSM 16087 / CCUG 44356 / LMG 19182 / AMMD) (Burkholderia cepacia (strain AMMD)).